The chain runs to 648 residues: Mitotic interactor and substrate of PLK1 (648 aa).

Ser-77 is modified (phosphoserine; by CDK1). Residues Thr-149 and Thr-190 each carry the phosphothreonine modification. The residue at position 220 (Ser-220) is a Phosphoserine. Disordered stretches follow at residues 242–383 and 430–460; these read VNDP…PEAR and KATESPRHVSESSGRSLSSKQEWSKPPGKAT. The residue at position 253 (Ser-253) is a Phosphoserine; by CDK1. The span at 255–281 shows a compositional bias: basic and acidic residues; that stretch reads ETPKETPIEREIRLAQEREAELREQRG. Thr-256 bears the Phosphothreonine; by CDK1 mark. Residue Ser-318 is modified to Phosphoserine. Over residues 325–339 the composition is skewed to basic and acidic residues; the sequence is MVQETQREEDHRREG. A Phosphothreonine; by CDK1 modification is found at Thr-347. The span at 349–367 shows a compositional bias: polar residues; that stretch reads DWPSQDPQPGLQRSLSSDC. Ser-352 and Ser-364 each carry phosphoserine. Phosphoserine; by PLK1 is present on residues Ser-365 and Ser-439. Positions 440–450 are enriched in polar residues; it reads ESSGRSLSSKQ. A phosphoserine mark is found at Ser-507 and Ser-509. Residues 511 to 534 adopt a coiled-coil conformation; it reads DLLEREMESVLRREREVAEERRNA. Residues 539–568 form a disordered region; the sequence is VFSPVPAEDESHEQDSRSSSRASGITGSYS. Ser-541 is subject to Phosphoserine; by CDK1. Ser-554 is modified (phosphoserine; by PLK1). Positions 557–568 are enriched in polar residues; that stretch reads SSRASGITGSYS. Ser-644 is modified (phosphoserine).

It belongs to the MISP family. Associates with F-actin. Interacts with DCTN1; this interaction regulates DCTN1 distribution at the cell cortex. Interacts with PTK2/FAK and MAPRE1. In terms of processing, phosphorylated by CDK1 and PLK1. CDK1 is the priming kinase for PLK1 phosphorylation. Phosphorylation by PLK1 is required for proper spindle orientation at metaphase.

It localises to the cell junction. The protein localises to the focal adhesion. The protein resides in the cytoplasm. Its subcellular location is the cytoskeleton. It is found in the cell cortex. In terms of biological role, plays a role in mitotic spindle orientation and mitotic progression. Regulates the distribution of dynactin at the cell cortex in a PLK1-dependent manner, thus stabilizing cortical and astral microtubule attachments required for proper mitotic spindle positioning. May link microtubules to the actin cytoskeleton and focal adhesions. May be required for directed cell migration and centrosome orientation. May also be necessary for proper stacking of the Golgi apparatus. The sequence is that of Mitotic interactor and substrate of PLK1 from Mus musculus (Mouse).